The primary structure comprises 162 residues: Protein NrdI (162 aa).

The protein belongs to the NrdI family.

Its function is as follows. Probably involved in ribonucleotide reductase function. This chain is Protein NrdI, found in Streptococcus pyogenes serotype M2 (strain MGAS10270).